We begin with the raw amino-acid sequence, 611 residues long: BTB/POZ domain-containing protein 9 (611 aa).

The region spanning 36-104 is the BTB domain; that stretch reads GDVTFVVEKK…IYTGRATLTD (69 aa). Residues 142 to 240 enclose the BACK domain; it reads VCMTFDVASL…SLTELLNVVR (99 aa). The disordered stretch occupies residues 560–611; that stretch reads QSAQKDSSDEPGTGGASAAGQQLDPHALQAPSGSSLPSSPGSNSRSPNRQHQ. Positions 586 to 611 are enriched in low complexity; it reads ALQAPSGSSLPSSPGSNSRSPNRQHQ.

The chain is BTB/POZ domain-containing protein 9 (BTBD9) from Bos taurus (Bovine).